Consider the following 372-residue polypeptide: Alanine racemase (372 aa).

Lys-48 serves as the catalytic Proton acceptor; specific for D-alanine. Lys-48 carries the N6-(pyridoxal phosphate)lysine modification. A substrate-binding site is contributed by Arg-143. Catalysis depends on Tyr-268, which acts as the Proton acceptor; specific for L-alanine. Met-316 contacts substrate.

It belongs to the alanine racemase family. The cofactor is pyridoxal 5'-phosphate.

The enzyme catalyses L-alanine = D-alanine. It participates in amino-acid biosynthesis; D-alanine biosynthesis; D-alanine from L-alanine: step 1/1. Functionally, catalyzes the interconversion of L-alanine and D-alanine. May also act on other amino acids. This Vibrio vulnificus (strain YJ016) protein is Alanine racemase (alr).